Consider the following 765-residue polypeptide: Proton-coupled zinc antiporter SLC30A5 (765 aa).

Methionine 1 is modified (N-acetylmethionine). The Cytoplasmic portion of the chain corresponds to 1–32 (MEEKYGGDVLAGPGGGGGLGPVDVPSARLTKY). The helical transmembrane segment at 33-53 (IVLLCFTKFLKAVGLFESYDL) threads the bilayer. Over 54-56 (LKA) the chain is Lumenal. The chain crosses the membrane as a helical span at residues 57–77 (VHIVQFIFILKLGTAFFMVLF). At 78 to 98 (QKPFSSGKTITKHQWIKIFKH) the chain is on the cytoplasmic side. The chain crosses the membrane as a helical span at residues 99 to 119 (AVAGCIISLLWFFGLTLCGPL). Residue arginine 120 is a topological domain, lumenal. Residues 121–141 (TLLLFEHSDIVVISLLSVLFT) form a helical membrane-spanning segment. Residues 142–152 (SSGGGPAKTRG) are Cytoplasmic-facing. Residues 153–173 (AAFFIIAVICLLLFDNDDLMA) form a helical membrane-spanning segment. Topologically, residues 174-193 (KMAEHPEGHHDSALTHMLYT) are lumenal. The chain crosses the membrane as a helical span at residues 194–214 (AIAFLGVADHKGGVLLLVLAL). Residues 215–238 (CCKVGFHTASRKLSVDVGGAKRLQ) are Cytoplasmic-facing. A helical membrane pass occupies residues 239-259 (ALSHLVSVLLLCPWVIVLSVT). The Lumenal segment spans residues 260–267 (TESKVESW). Residues 268–288 (FSLIMPFATVIFFVMILDFYV) form a helical membrane-spanning segment. Over 289–303 (DSICSVKMEVSKCAR) the chain is Cytoplasmic. A helical transmembrane segment spans residues 304-324 (YGSFPIFISALLFGNFWTHPI). At 325–342 (TDQLRAMNKAAHQESTEH) the chain is on the lumenal side. Residues 343-363 (VLSGGVVVSAIFFILSANILS) form a helical membrane-spanning segment. Over 364–418 (SPSKRGQKGTLIGYSPEGTPLYNFMGDAFQHSSQSIPRFIKESLKQILEESDSRQ) the chain is Cytoplasmic. Residues 419–439 (IFYFLCLNLLFTFVELFYGVL) form a helical membrane-spanning segment. The interval 420–640 (FYFLCLNLLF…ILIFLSVVPL (221 aa)) is mediates homodimerization with SLC30A6. Residues 440-448 (TNSLGLISD) lie on the Lumenal side of the membrane. Residues 449-469 (GFHMLFDCSALVMGLFAALMS) traverse the membrane as a helical segment. Positions 451 and 455 each coordinate Zn(2+). Topologically, residues 470 to 483 (RWKATRIFSYGYGR) are cytoplasmic. A helical transmembrane segment spans residues 484–504 (IEILSGFINGLFLIVIAFFVF). At 505–520 (MESVARLIDPPELDTH) the chain is on the lumenal side. The helical transmembrane segment at 521 to 541 (MLTPVSVGGLIVNLIGICAFS) threads the bilayer. Residues 542–578 (HAHSHAHGASQGSCHSSDHSHSHHMHGHSDHGHGHSH) form a his-rich loop; required for zinc transport region. At 542-592 (HAHSHAHGASQGSCHSSDHSHSHHMHGHSDHGHGHSHGSAGGGMNANMRGV) the chain is on the cytoplasmic side. The interval 551–581 (SQGSCHSSDHSHSHHMHGHSDHGHGHSHGSA) is disordered. The chain crosses the membrane as a helical span at residues 593 to 613 (FLHVLADTLGSIGVIVSTVLI). Residues histidine 595 and aspartate 599 each contribute to the Zn(2+) site. The Lumenal segment spans residues 614–617 (EQFG). A helical transmembrane segment spans residues 618-638 (WFIADPLCSLFIAILIFLSVV). At 639–765 (PLIKDACQVL…KYCKDGTYIM (127 aa)) the chain is on the cytoplasmic side.

The protein belongs to the cation diffusion facilitator (CDF) transporter (TC 2.A.4) family. SLC30A subfamily. Heterodimer with SLC30A6/ZNT6; form a functional zinc ion transmembrane transporter. In terms of processing, could homodimerize through the formation of dityrosine bonds upon oxidative stress. As to expression, ubiquitously expressed. Highly expressed in pancreas, liver and kidney. Expressed abundantly in insulin-containing beta cells, undetectable in other endocrine cell types including glucagon-secreting alpha cells and most acinar cells (at protein level).

Its subcellular location is the golgi apparatus. The protein resides in the golgi stack membrane. It localises to the cytoplasmic vesicle. The protein localises to the COPII-coated vesicle membrane. It is found in the secretory vesicle membrane. Its subcellular location is the trans-Golgi network membrane. The protein resides in the endoplasmic reticulum membrane. It localises to the cell membrane. The protein localises to the apical cell membrane. The enzyme catalyses Zn(2+)(in) + 2 H(+)(out) = Zn(2+)(out) + 2 H(+)(in). Together with SLC30A6 forms a functional proton-coupled zinc ion antiporter mediating zinc entry into the lumen of organelles along the secretory pathway. By contributing to zinc ion homeostasis within the early secretory pathway, regulates the activation and folding of enzymes like alkaline phosphatases and enzymes involved in phosphatidylinositol glycan anchor biosynthesis. Through the transport of zinc into secretory granules of pancreatic beta-cells, plays an important role in the storage and secretion of insulin. Its function is as follows. Zinc ion:proton antiporter mediating influx and efflux of zinc at the plasma membrane. The sequence is that of Proton-coupled zinc antiporter SLC30A5 from Homo sapiens (Human).